The primary structure comprises 196 residues: Pyridoxal 5'-phosphate synthase subunit PdxT (196 aa).

Position 47 to 49 (47 to 49 (GES)) interacts with L-glutamine. Cys-79 serves as the catalytic Nucleophile. Residues Arg-106 and 134–135 (IR) each bind L-glutamine. Residues His-170 and Glu-172 each act as charge relay system in the active site.

It belongs to the glutaminase PdxT/SNO family. In the presence of PdxS, forms a dodecamer of heterodimers. Only shows activity in the heterodimer.

It carries out the reaction aldehydo-D-ribose 5-phosphate + D-glyceraldehyde 3-phosphate + L-glutamine = pyridoxal 5'-phosphate + L-glutamate + phosphate + 3 H2O + H(+). The catalysed reaction is L-glutamine + H2O = L-glutamate + NH4(+). It participates in cofactor biosynthesis; pyridoxal 5'-phosphate biosynthesis. Catalyzes the hydrolysis of glutamine to glutamate and ammonia as part of the biosynthesis of pyridoxal 5'-phosphate. The resulting ammonia molecule is channeled to the active site of PdxS. This is Pyridoxal 5'-phosphate synthase subunit PdxT from Bacillus mycoides (strain KBAB4) (Bacillus weihenstephanensis).